Here is a 267-residue protein sequence, read N- to C-terminus: Imidazole glycerol phosphate synthase subunit HisF (267 aa).

Catalysis depends on residues Asp-21 and Asp-140.

Belongs to the HisA/HisF family. In terms of assembly, heterodimer of HisH and HisF.

The protein resides in the cytoplasm. It catalyses the reaction 5-[(5-phospho-1-deoxy-D-ribulos-1-ylimino)methylamino]-1-(5-phospho-beta-D-ribosyl)imidazole-4-carboxamide + L-glutamine = D-erythro-1-(imidazol-4-yl)glycerol 3-phosphate + 5-amino-1-(5-phospho-beta-D-ribosyl)imidazole-4-carboxamide + L-glutamate + H(+). Its pathway is amino-acid biosynthesis; L-histidine biosynthesis; L-histidine from 5-phospho-alpha-D-ribose 1-diphosphate: step 5/9. IGPS catalyzes the conversion of PRFAR and glutamine to IGP, AICAR and glutamate. The HisF subunit catalyzes the cyclization activity that produces IGP and AICAR from PRFAR using the ammonia provided by the HisH subunit. The sequence is that of Imidazole glycerol phosphate synthase subunit HisF from Bordetella avium (strain 197N).